The sequence spans 238 residues: UPF0280 protein Msm_0088 (238 aa).

It belongs to the UPF0280 family.

This is UPF0280 protein Msm_0088 from Methanobrevibacter smithii (strain ATCC 35061 / DSM 861 / OCM 144 / PS).